Here is a 2038-residue protein sequence, read N- to C-terminus: Fer-1-like protein 5 (2038 aa).

7 C2 domains span residues 1–100 (MLRV…MFVR), 145–265 (TQKK…TLLR), 307–424 (QNTR…QGMY), 1055–1186 (TPED…FTPL), 1225–1345 (IPCK…SLNY), 1467–1587 (PKPP…ARCG), and 1705–1853 (GPPG…KQCS). Residues Asp1502, Asp1508, Asp1557, Phe1558, Asp1559, Asp1565, Asp1824, Ser1827, and Asp1830 each coordinate Ca(2+). Residues 1961–1981 (IICLVVTLVIGFILLNFVYSA) form a helical membrane-spanning segment.

This sequence belongs to the ferlin family. In terms of assembly, interacts (via second C2 domain) with EHD1 and EHD2. Ca(2+) is required as a cofactor. As to expression, expressed in differentiating myoblasts and myotubes.

Its subcellular location is the cell membrane. It localises to the membrane. Its function is as follows. Plays a role in myoblast fusion; probable mediator of endocytic recycling for membrane trafficking events during myotube formation. This is Fer-1-like protein 5 (Fer1l5) from Mus musculus (Mouse).